A 470-amino-acid chain; its full sequence is Velvet complex subunit B (470 aa).

2 disordered regions span residues M1–T148 and V223–F321. Over residues P15–Q37 the composition is skewed to low complexity. Pro residues predominate over residues H38 to T49. The segment covering H74 to S86 has biased composition (basic residues). The span at N102 to E124 shows a compositional bias: pro residues. Positions G147–R452 constitute a Velvet domain. Over residues G232–S241 the composition is skewed to low complexity. The span at T242–L255 shows a compositional bias: polar residues. Over residues Q280–Y301 the composition is skewed to low complexity. Polar residues predominate over residues G307–N318.

Belongs to the velvet family. VelB subfamily. Component of the heterotrimeric velvet complex composed of laeA, veA and velB; VeA acting as a bridging protein between laeA and velB. Forms a heterodimeric complex with vosA; the formation of the velB-vosA complex is light-dependent.

It localises to the nucleus. Its subcellular location is the cytoplasm. In terms of biological role, component of the velvet transcription factor complex that controls sexual/asexual developmental ratio in response to light, promoting sexual development in the darkness while stimulating asexual sporulation under illumination. The velvet complex acts as a global regulator for secondary metabolite gene expression. Component of the velB-VosA heterodimeric complex that plays a dual role in activating genes associated with spore maturation and repressing certain development-associated genes. The complex binds DNA through the DNA-binding domain of vosA that recognizes an 11-nucleotide consensus sequence 5'-CTGGCCGCGGC-3' consisting of two motifs in the promoters of key developmental regulatory genes. Controls the expression of the pink pigment aurofusarin and the mycotoxin deoxynivalenol gene clusters. Regulates hyphae formation, hyphal hydrophobicity and conidiation. Regulates of cell wall integrity and pathogenicity. In Gibberella zeae (strain ATCC MYA-4620 / CBS 123657 / FGSC 9075 / NRRL 31084 / PH-1) (Wheat head blight fungus), this protein is Velvet complex subunit B.